A 448-amino-acid chain; its full sequence is Zinc finger and BTB domain-containing protein 14 (448 aa).

The BTB domain occupies 36–102 (CDIAIVVEDV…MYTAKISVKK (67 aa)). Positions 50–66 (HRCVLAACSTYFKKLFK) match the Nuclear localization signal motif. The segment at 130 to 193 (VSSPEENTQS…QEDGKSPTTT (64 aa)) is disordered. Acidic residues predominate over residues 156 to 167 (DTQDDEVEEIGD). 5 consecutive C2H2-type zinc fingers follow at residues 275–302 (IVCQ…ADRP), 303–330 (FVCE…GYKP), 331–358 (YSCE…NERP), 359–386 (FACH…GEKP), and 387–415 (FVCG…ERKQ). A compositionally biased stretch (basic and acidic residues) spans 404-415 (RHENNMHSERKQ). Residues 404–425 (RHENNMHSERKQVTTANSIQSE) form a disordered region. Positions 416 to 425 (VTTANSIQSE) are enriched in polar residues.

Belongs to the krueppel C2H2-type zinc-finger protein family. In terms of assembly, interacts with ZBTB21.

Its subcellular location is the nucleus. Its function is as follows. Transcriptional activator of the dopamine transporter (DAT), binding it's promoter at the consensus sequence 5'-CCTGCACAGTTCACGGA-3'. Binds to 5'-d(GCC)(n)-3' trinucleotide repeats in promoter regions and acts as a repressor of the FMR1 gene. Transcriptional repressor of MYC and thymidine kinase promoters. The protein is Zinc finger and BTB domain-containing protein 14 (ZBTB14) of Gallus gallus (Chicken).